The primary structure comprises 149 residues: Deoxyuridine 5'-triphosphate nucleotidohydrolase (149 aa).

Substrate contacts are provided by residues 68–70 (RSG), Asn-81, and 85–87 (LID).

Belongs to the dUTPase family. Mg(2+) is required as a cofactor.

It catalyses the reaction dUTP + H2O = dUMP + diphosphate + H(+). Its pathway is pyrimidine metabolism; dUMP biosynthesis; dUMP from dCTP (dUTP route): step 2/2. Its function is as follows. This enzyme is involved in nucleotide metabolism: it produces dUMP, the immediate precursor of thymidine nucleotides and it decreases the intracellular concentration of dUTP so that uracil cannot be incorporated into DNA. In Aromatoleum aromaticum (strain DSM 19018 / LMG 30748 / EbN1) (Azoarcus sp. (strain EbN1)), this protein is Deoxyuridine 5'-triphosphate nucleotidohydrolase.